The primary structure comprises 164 residues: N5-carboxyaminoimidazole ribonucleotide mutase (164 aa).

Residues Ser13, Asp16, and Arg43 each coordinate substrate.

It belongs to the AIR carboxylase family. Class I subfamily.

The enzyme catalyses 5-carboxyamino-1-(5-phospho-D-ribosyl)imidazole + H(+) = 5-amino-1-(5-phospho-D-ribosyl)imidazole-4-carboxylate. Its pathway is purine metabolism; IMP biosynthesis via de novo pathway; 5-amino-1-(5-phospho-D-ribosyl)imidazole-4-carboxylate from 5-amino-1-(5-phospho-D-ribosyl)imidazole (N5-CAIR route): step 2/2. In terms of biological role, catalyzes the conversion of N5-carboxyaminoimidazole ribonucleotide (N5-CAIR) to 4-carboxy-5-aminoimidazole ribonucleotide (CAIR). This Haemophilus influenzae (strain ATCC 51907 / DSM 11121 / KW20 / Rd) protein is N5-carboxyaminoimidazole ribonucleotide mutase.